We begin with the raw amino-acid sequence, 206 residues long: Ribosomal RNA large subunit methyltransferase E (206 aa).

The S-adenosyl-L-methionine site is built by G60, W62, D80, D96, and D121. K161 functions as the Proton acceptor in the catalytic mechanism.

It belongs to the class I-like SAM-binding methyltransferase superfamily. RNA methyltransferase RlmE family.

The protein localises to the cytoplasm. The catalysed reaction is uridine(2552) in 23S rRNA + S-adenosyl-L-methionine = 2'-O-methyluridine(2552) in 23S rRNA + S-adenosyl-L-homocysteine + H(+). Specifically methylates the uridine in position 2552 of 23S rRNA at the 2'-O position of the ribose in the fully assembled 50S ribosomal subunit. This chain is Ribosomal RNA large subunit methyltransferase E, found in Hydrogenovibrio crunogenus (strain DSM 25203 / XCL-2) (Thiomicrospira crunogena).